The sequence spans 460 residues: uncharacterized protein (460 aa).

Residues 5–63 (TWHQGELIEVAIADLSDTGDGVGRFAERVVFVPDTVPGDRVLVRLLHVKPNYAHGKLHQ) form the TRAM domain. [4Fe-4S] cluster contacts are provided by Cys76, Cys82, Cys85, and Cys164. The S-adenosyl-L-methionine site is built by Gln288, Tyr317, Glu338, and Asp383. The Nucleophile role is filled by Cys410.

This sequence belongs to the class I-like SAM-binding methyltransferase superfamily. RNA M5U methyltransferase family.

This is an uncharacterized protein from Nostoc sp. (strain PCC 7120 / SAG 25.82 / UTEX 2576).